The following is a 254-amino-acid chain: 3-dehydroquinate dehydratase (254 aa).

3-dehydroquinate is bound by residues 47–49 (EFR) and arginine 83. Histidine 144 functions as the Proton donor/acceptor in the catalytic mechanism. Lysine 171 acts as the Schiff-base intermediate with substrate in catalysis. Arginine 213, serine 232, and glutamine 236 together coordinate 3-dehydroquinate.

Belongs to the type-I 3-dehydroquinase family. In terms of assembly, homodimer.

It carries out the reaction 3-dehydroquinate = 3-dehydroshikimate + H2O. It participates in metabolic intermediate biosynthesis; chorismate biosynthesis; chorismate from D-erythrose 4-phosphate and phosphoenolpyruvate: step 3/7. Its function is as follows. Involved in the third step of the chorismate pathway, which leads to the biosynthesis of aromatic amino acids. Catalyzes the cis-dehydration of 3-dehydroquinate (DHQ) and introduces the first double bond of the aromatic ring to yield 3-dehydroshikimate. The protein is 3-dehydroquinate dehydratase of Neisseria meningitidis serogroup A / serotype 4A (strain DSM 15465 / Z2491).